Reading from the N-terminus, the 395-residue chain is Elongation factor Tu (395 aa).

Positions 10–204 constitute a tr-type G domain; the sequence is KPHVNIGTIG…TVDSYIPEPK (195 aa). The G1 stretch occupies residues 19–26; the sequence is GHVDHGKT. A GTP-binding site is contributed by 19–26; it reads GHVDHGKT. Position 26 (Thr-26) interacts with Mg(2+). Residues 60-64 form a G2 region; that stretch reads GITIN. A G3 region spans residues 81-84; the sequence is DAPG. Residues 81–85 and 136–139 contribute to the GTP site; these read DAPGH and NKTD. The interval 136–139 is G4; sequence NKTD. A G5 region spans residues 174-176; that stretch reads SAL.

Belongs to the TRAFAC class translation factor GTPase superfamily. Classic translation factor GTPase family. EF-Tu/EF-1A subfamily. Monomer.

It localises to the cytoplasm. The enzyme catalyses GTP + H2O = GDP + phosphate + H(+). Its function is as follows. GTP hydrolase that promotes the GTP-dependent binding of aminoacyl-tRNA to the A-site of ribosomes during protein biosynthesis. The chain is Elongation factor Tu from Leuconostoc citreum (strain KM20).